A 65-amino-acid polypeptide reads, in one-letter code: Large ribosomal subunit protein bL31 (65 aa).

Zn(2+) contacts are provided by cysteine 16, cysteine 18, cysteine 36, and cysteine 39.

The protein belongs to the bacterial ribosomal protein bL31 family. Type A subfamily. In terms of assembly, part of the 50S ribosomal subunit. Zn(2+) serves as cofactor.

Functionally, binds the 23S rRNA. This Campylobacter jejuni subsp. doylei (strain ATCC BAA-1458 / RM4099 / 269.97) protein is Large ribosomal subunit protein bL31.